Consider the following 446-residue polypeptide: Tubulin beta-3 chain (446 aa).

GTP contacts are provided by Q11, E69, S138, G142, T143, G144, N204, and N226. A Mg(2+)-binding site is contributed by E69. Positions 421 to 446 are disordered; that stretch reads EYQQYQDATAEEEDYEEEEEDEEVAA. A compositionally biased stretch (acidic residues) spans 429-446; it reads TAEEEDYEEEEEDEEVAA.

Belongs to the tubulin family. Dimer of alpha and beta chains. A typical microtubule is a hollow water-filled tube with an outer diameter of 25 nm and an inner diameter of 15 nM. Alpha-beta heterodimers associate head-to-tail to form protofilaments running lengthwise along the microtubule wall with the beta-tubulin subunit facing the microtubule plus end conferring a structural polarity. Microtubules usually have 13 protofilaments but different protofilament numbers can be found in some organisms and specialized cells. The cofactor is Mg(2+). In terms of tissue distribution, expressed in roots, second node, leaf sheaths, and suspension cultured cells.

It localises to the cytoplasm. The protein resides in the cytoskeleton. Tubulin is the major constituent of microtubules, a cylinder consisting of laterally associated linear protofilaments composed of alpha- and beta-tubulin heterodimers. Microtubules grow by the addition of GTP-tubulin dimers to the microtubule end, where a stabilizing cap forms. Below the cap, tubulin dimers are in GDP-bound state, owing to GTPase activity of alpha-tubulin. The chain is Tubulin beta-3 chain (TUBB3) from Oryza sativa subsp. japonica (Rice).